Consider the following 516-residue polypeptide: Protein DML1 (516 aa).

The protein belongs to the misato family.

It is found in the mitochondrion. Its function is as follows. Involved in the partitioning of the mitochondrial organelle and mitochondrial DNA (mtDNA) inheritance. This chain is Protein DML1 (DML1), found in Coccidioides immitis (strain RS) (Valley fever fungus).